The following is a 327-amino-acid chain: Nuclear apoptosis-inducing factor 1 (327 aa).

Residues 1–70 are required for nuclear localization and apoptosis-inducing activity; the sequence is MAVPAKKRKM…CRRELPEVKK (70 aa). Positions 88-98 are enriched in low complexity; the sequence is AAVEGGEAPGP. Disordered stretches follow at residues 88-118 and 303-327; these read AAVE…AGGP and NMPN…SIIQ. Over residues 104–117 the composition is skewed to gly residues; it reads AGGPGTGGGSGAGG. Polar residues predominate over residues 316–327; the sequence is VAQNGQPDSIIQ.

Belongs to the NAIF1 family. In terms of assembly, interacts with HARBI1.

The protein localises to the nucleus. Induces apoptosis. This chain is Nuclear apoptosis-inducing factor 1 (NAIF1), found in Bos taurus (Bovine).